A 334-amino-acid chain; its full sequence is Putative lysine N-acyltransferase C17G9.06c (334 aa).

H248 is a substrate binding site. Catalysis depends on E286, which acts as the Proton acceptor.

Belongs to the lysine N-acyltransferase mbtK family.

It localises to the cytoplasm. Its subcellular location is the nucleus. The sequence is that of Putative lysine N-acyltransferase C17G9.06c from Schizosaccharomyces pombe (strain 972 / ATCC 24843) (Fission yeast).